Reading from the N-terminus, the 198-residue chain is Mediator of RNA polymerase II transcription subunit 20 (198 aa).

The protein belongs to the Mediator complex subunit 20 family. Component of the Mediator complex.

The protein resides in the nucleus. In terms of biological role, component of the Mediator complex, a coactivator involved in the regulated transcription of nearly all RNA polymerase II-dependent genes. Mediator functions as a bridge to convey information from gene-specific regulatory proteins to the basal RNA polymerase II transcription machinery. Mediator is recruited to promoters by direct interactions with regulatory proteins and serves as a scaffold for the assembly of a functional preinitiation complex with RNA polymerase II and the general transcription factors. The sequence is that of Mediator of RNA polymerase II transcription subunit 20 (mdt-20) from Caenorhabditis briggsae.